The chain runs to 273 residues: Formamidopyrimidine-DNA glycosylase (273 aa).

Pro-2 (schiff-base intermediate with DNA) is an active-site residue. The active-site Proton donor is Glu-3. Lys-58 functions as the Proton donor; for beta-elimination activity in the catalytic mechanism. His-91 and Arg-110 together coordinate DNA. The segment at 238–272 (QVYGKTDQPCARCATPIEKIKVGGRGTHFCPSCQK) adopts an FPG-type zinc-finger fold. Arg-262 serves as the catalytic Proton donor; for delta-elimination activity.

The protein belongs to the FPG family. As to quaternary structure, monomer. Zn(2+) is required as a cofactor.

It catalyses the reaction Hydrolysis of DNA containing ring-opened 7-methylguanine residues, releasing 2,6-diamino-4-hydroxy-5-(N-methyl)formamidopyrimidine.. It carries out the reaction 2'-deoxyribonucleotide-(2'-deoxyribose 5'-phosphate)-2'-deoxyribonucleotide-DNA = a 3'-end 2'-deoxyribonucleotide-(2,3-dehydro-2,3-deoxyribose 5'-phosphate)-DNA + a 5'-end 5'-phospho-2'-deoxyribonucleoside-DNA + H(+). Functionally, involved in base excision repair of DNA damaged by oxidation or by mutagenic agents. Acts as a DNA glycosylase that recognizes and removes damaged bases. Has a preference for oxidized purines, such as 7,8-dihydro-8-oxoguanine (8-oxoG). Has AP (apurinic/apyrimidinic) lyase activity and introduces nicks in the DNA strand. Cleaves the DNA backbone by beta-delta elimination to generate a single-strand break at the site of the removed base with both 3'- and 5'-phosphates. The sequence is that of Formamidopyrimidine-DNA glycosylase (mutM) from Streptococcus mutans serotype c (strain ATCC 700610 / UA159).